Consider the following 559-residue polypeptide: Urocanate hydratase (559 aa).

NAD(+) contacts are provided by residues 53–54 (GG), glutamine 131, 177–179 (GMG), glutamate 197, arginine 202, 243–244 (NA), 264–268 (QTSAH), 274–275 (YL), and tyrosine 323. Cysteine 411 is a catalytic residue. Glycine 493 provides a ligand contact to NAD(+).

It belongs to the urocanase family. It depends on NAD(+) as a cofactor.

The protein resides in the cytoplasm. The catalysed reaction is 4-imidazolone-5-propanoate = trans-urocanate + H2O. It functions in the pathway amino-acid degradation; L-histidine degradation into L-glutamate; N-formimidoyl-L-glutamate from L-histidine: step 2/3. Its function is as follows. Catalyzes the conversion of urocanate to 4-imidazolone-5-propionate. The chain is Urocanate hydratase from Pseudomonas aeruginosa (strain ATCC 15692 / DSM 22644 / CIP 104116 / JCM 14847 / LMG 12228 / 1C / PRS 101 / PAO1).